Reading from the N-terminus, the 199-residue chain is Riboflavin synthase (199 aa).

2 Lumazine-binding repeats span residues 1 to 95 and 96 to 188; these read MFSG…IGGH and FVSG…VDTI. 2,4-dihydroxypteridine is bound by residues 4-6, 46-48, 60-65, 99-101, Lys130, 139-141, and 153-158; these read GII, CLT, DVTEET, GHV, SLT, and SLIPET.

As to quaternary structure, homotrimer.

It carries out the reaction 2 6,7-dimethyl-8-(1-D-ribityl)lumazine + H(+) = 5-amino-6-(D-ribitylamino)uracil + riboflavin. The protein operates within cofactor biosynthesis; riboflavin biosynthesis; riboflavin from 2-hydroxy-3-oxobutyl phosphate and 5-amino-6-(D-ribitylamino)uracil: step 2/2. Catalyzes the dismutation of two molecules of 6,7-dimethyl-8-ribityllumazine, resulting in the formation of riboflavin and 5-amino-6-(D-ribitylamino)uracil. The sequence is that of Riboflavin synthase (ribE) from Chlamydia trachomatis serovar D (strain ATCC VR-885 / DSM 19411 / UW-3/Cx).